The chain runs to 82 residues: MSKGHSLQDPYLNTLRKERVPVSIYLVNGIKLQGQIESFDQFVILLKNTVSQMVYKHAISTVVPSRPVRLPSGDQPAEPGNA.

In terms of domain architecture, Sm spans 9-68 (DPYLNTLRKERVPVSIYLVNGIKLQGQIESFDQFVILLKNTVSQMVYKHAISTVVPSRPV).

This sequence belongs to the Hfq family. In terms of assembly, homohexamer.

Functionally, RNA chaperone that binds small regulatory RNA (sRNAs) and mRNAs to facilitate mRNA translational regulation in response to envelope stress, environmental stress and changes in metabolite concentrations. Also binds with high specificity to tRNAs. This chain is RNA-binding protein Hfq, found in Pseudomonas aeruginosa (strain LESB58).